The sequence spans 411 residues: LIM domain-binding protein 1 (411 aa).

Disordered stretches follow at residues 284–330 and 367–411; these read PPAE…TFAL and DAAN…QASQ. Low complexity predominate over residues 302–318; that stretch reads SGGSTMSSGGGNTNNSN. Positions 336 to 375 constitute an LIM interaction domain (LID) domain; it reads DVMVVGEPTLMGGEFGDEDERLITRLENTQFDAANGIDDE.

The protein belongs to the LDB family. As to quaternary structure, forms homodimers and heterodimers. As to expression, first expressed at stages 15-16 in presumptive limb mesoderm. As limb outgrowth proceeds, expressed in the entire limb bud, concentrating in the distal mesoderm throughout limb development. Both hindlimbs and forelimbs exhibit similar expression patterns.

The protein localises to the nucleus. Functionally, binds to the LIM domain of a wide variety of LIM domain-containing transcription factors. This is LIM domain-binding protein 1 from Gallus gallus (Chicken).